The following is a 344-amino-acid chain: Methionine import ATP-binding protein MetN 1 (344 aa).

The region spanning 2–241 (IELRNLSQRF…PHHEVTRALI (240 aa)) is the ABC transporter domain. ATP is bound at residue 38 to 45 (GRSGAGKS).

It belongs to the ABC transporter superfamily. Methionine importer (TC 3.A.1.24) family. In terms of assembly, the complex is composed of two ATP-binding proteins (MetN), two transmembrane proteins (MetI) and a solute-binding protein (MetQ).

It is found in the cell inner membrane. The enzyme catalyses L-methionine(out) + ATP + H2O = L-methionine(in) + ADP + phosphate + H(+). It catalyses the reaction D-methionine(out) + ATP + H2O = D-methionine(in) + ADP + phosphate + H(+). In terms of biological role, part of the ABC transporter complex MetNIQ involved in methionine import. Responsible for energy coupling to the transport system. The chain is Methionine import ATP-binding protein MetN 1 from Burkholderia ambifaria (strain ATCC BAA-244 / DSM 16087 / CCUG 44356 / LMG 19182 / AMMD) (Burkholderia cepacia (strain AMMD)).